Consider the following 239-residue polypeptide: ATP synthase subunit a (239 aa).

Helical transmembrane passes span 13–33 (IWFD…VFAF), 75–95 (FHLM…LGLV), 113–133 (DPIV…FFGM), 174–194 (GNIF…ASVG), and 208–230 (WVAF…SMVY).

This sequence belongs to the ATPase A chain family. F-type ATPases have 2 components, CF(1) - the catalytic core - and CF(0) - the membrane proton channel. CF(1) has five subunits: alpha(3), beta(3), gamma(1), delta(1), epsilon(1). CF(0) has three main subunits: a(1), b(2) and c(9-12). The alpha and beta chains form an alternating ring which encloses part of the gamma chain. CF(1) is attached to CF(0) by a central stalk formed by the gamma and epsilon chains, while a peripheral stalk is formed by the delta and b chains.

Its subcellular location is the cell membrane. Key component of the proton channel; it plays a direct role in the translocation of protons across the membrane. The chain is ATP synthase subunit a from Enterococcus faecalis (strain ATCC 700802 / V583).